We begin with the raw amino-acid sequence, 73 residues long: uncharacterized protein (73 aa).

Residues 1–32 (MFLSSAVRKDSNGVRHLPSVQRWTPGSPPTRA) are disordered.

This is an uncharacterized protein from Frog virus 3 (isolate Goorha) (FV-3).